The sequence spans 510 residues: Proline--tRNA ligase (510 aa).

This sequence belongs to the class-II aminoacyl-tRNA synthetase family. ProS type 3 subfamily. As to quaternary structure, homodimer.

It is found in the cytoplasm. It carries out the reaction tRNA(Pro) + L-proline + ATP = L-prolyl-tRNA(Pro) + AMP + diphosphate. Catalyzes the attachment of proline to tRNA(Pro) in a two-step reaction: proline is first activated by ATP to form Pro-AMP and then transferred to the acceptor end of tRNA(Pro). This is Proline--tRNA ligase from Sphingomonas elodea.